The primary structure comprises 932 residues: Chitin synthase regulatory factor 3 (932 aa).

Positions 1–16 (MKDSHSSRRKYEKEKL) are enriched in basic and acidic residues. 3 disordered regions span residues 1–53 (MKDS…PTSR), 264–356 (TLEE…LQQP), and 374–406 (EVPAPTFDRRNVSRNSNNNSPEGYDNNRTNPTV). 3 stretches are compositionally biased toward polar residues: residues 35–53 (SGNTASSSSPTLQFRPTSR), 274–285 (DSITNTVSNASS), and 308–319 (SHFSSTDSNTDS). A compositionally biased stretch (basic and acidic residues) spans 337–349 (KSSETLKNPRNDD). S393 carries the phosphoserine modification. 7 Sel1-like repeats span residues 638-674 (PEALFLIGQFHSQGVLGFRRDLGKAFELYSLAAKKGH), 675-710 (PLSNYRVAVCLQTGTGVKPDTSKCVAIYKKAAEMDV), 711-747 (VEAMFRIALIYLNGLLGQKRNISLGVQWLERACKSKG), 751-788 (VRAMYELAKIYEQPDRYGVSATPERKFELYKQSAVYGY), 789-825 (AAAQCKLGECYEHGLLGCLAEPRRSIFWYTRAAEQDY), 826-863 (GEAELGLSGWYLTGSEGILPKNGEEALLWAHKAACKGL), and 864-899 (AKAQYAVGFMMEQGIGVAADPSSAHNWYIRAAKQGF). The disordered stretch occupies residues 905-932 (RLEEQALSSKQTHSKAPKKKQQEQCVVM).

This chain is Chitin synthase regulatory factor 3 (chr3), found in Schizosaccharomyces pombe (strain 972 / ATCC 24843) (Fission yeast).